Here is a 198-residue protein sequence, read N- to C-terminus: V-type ATP synthase subunit E 1 (198 aa).

The protein belongs to the V-ATPase E subunit family.

Its function is as follows. Produces ATP from ADP in the presence of a proton gradient across the membrane. In Clostridium tetani (strain Massachusetts / E88), this protein is V-type ATP synthase subunit E 1.